Here is a 106-residue protein sequence, read N- to C-terminus: Thiosulfate sulfurtransferase GlpE (106 aa).

The Rhodanese domain maps to 17-105; that stretch reads EQGEAKLVDI…WQRAQLPIVR (89 aa). The active-site Cysteine persulfide intermediate is the Cys-65.

The protein belongs to the GlpE family.

It localises to the cytoplasm. It carries out the reaction thiosulfate + hydrogen cyanide = thiocyanate + sulfite + 2 H(+). The catalysed reaction is thiosulfate + [thioredoxin]-dithiol = [thioredoxin]-disulfide + hydrogen sulfide + sulfite + 2 H(+). Functionally, transferase that catalyzes the transfer of sulfur from thiosulfate to thiophilic acceptors such as cyanide or dithiols. May function in a CysM-independent thiosulfate assimilation pathway by catalyzing the conversion of thiosulfate to sulfite, which can then be used for L-cysteine biosynthesis. This is Thiosulfate sulfurtransferase GlpE from Vibrio parahaemolyticus serotype O3:K6 (strain RIMD 2210633).